The following is a 676-amino-acid chain: Probable ERAD-associated E3 ubiquitin-protein ligase ASI1 (676 aa).

Residues 1–78 (MSTNILQHVK…TLQLAKVGIR (78 aa)) are Perinuclear space-facing. N-linked (GlcNAc...) asparagine glycosylation is found at N24, N34, N46, and N66. A helical transmembrane segment spans residues 79 to 99 (MFFSYSVSKYAVLCFSTAIIL). Residues 100 to 126 (NRLTVMSSLRSNSTNIRLPLWSKTLLH) lie on the Nuclear side of the membrane. Residues 127 to 147 (LVATLSLVKALLQILSQFGLM) form a helical membrane-spanning segment. Topologically, residues 148-156 (HELHVSDTD) are perinuclear space. Residues 157 to 177 (FYALSVYLFVALSDCIEIFIS) traverse the membrane as a helical segment. At 178-181 (STTN) the chain is on the nuclear side. Residues 182–202 (VPSLICSDFSIWGLSLNLYII) form a helical membrane-spanning segment. The Perinuclear space segment spans residues 203 to 277 (SKMPAGQQHI…NICLIHNYFP (75 aa)). A helical transmembrane segment spans residues 278 to 298 (GFFYISTILLASIGIFLKALF). Residues 299-676 (TSNPFRSLYS…VKGYSKLNIV (378 aa)) lie on the Nuclear side of the membrane. An RING-type; atypical zinc finger spans residues 624-664 (CLICKVNKRNIVTWPCRCLALCDDCRISLGYKGFATCVSCD).

Component of the Asi complex, which contains ASI1, ASI2 and ASI3. Interacts directly with ASI1.

It localises to the nucleus inner membrane. The catalysed reaction is S-ubiquitinyl-[E2 ubiquitin-conjugating enzyme]-L-cysteine + [acceptor protein]-L-lysine = [E2 ubiquitin-conjugating enzyme]-L-cysteine + N(6)-ubiquitinyl-[acceptor protein]-L-lysine.. Part of the nuclear inner membrane (INM)-specific branch of the ER-associated degradation (ERAD) pathway, required for the elimination of misfolded proteins in the INM, a specialized ER subdomain. Required for ERG11 degradation. Negative regulator of SPS-sensor signaling. Together with ASI2 and ASI3, prevents the unprocessed precursor forms of STP1 and STP2 that escape cytoplasmic anchoring from inducing SPS-sensor-regulated genes in the absence of inducing signals. Controls amino acid permease (AAP) gene expression in response to amino acid availability, a process mediated by the transcription factors STP1 and STP1. The protein is Probable ERAD-associated E3 ubiquitin-protein ligase ASI1 (ASI3) of Saccharomyces cerevisiae (strain ATCC 204508 / S288c) (Baker's yeast).